A 635-amino-acid chain; its full sequence is Surface protein F (635 aa).

A signal peptide spans 1-37 (MAKYRGKPFQLYVKLSCSTMMATSIILTNILPYDAQA). Composition is skewed to basic and acidic residues over residues 101–112 (NELDSKDNKSSH) and 193–202 (KSKDASKDTS). Disordered stretches follow at residues 101-122 (NELD…SDID) and 192-228 (HKSK…SGHV). Positions 597 to 601 (LPKAG) match the LPXTG sorting signal motif. At A600 the chain carries Pentaglycyl murein peptidoglycan amidated alanine. A propeptide spans 601-635 (GETIKEHWLPISVIVGAMGVLMIWLSRRNKLKNKA) (removed by sortase).

It localises to the secreted. It is found in the cell wall. This chain is Surface protein F, found in Staphylococcus aureus (strain NCTC 8325 / PS 47).